A 330-amino-acid chain; its full sequence is Free fatty acid receptor 2 (330 aa).

At Met1–Ser8 the chain is on the extracellular side. Residues Leu9–Leu29 traverse the membrane as a helical segment. Topologically, residues Arg30–Pro43 are cytoplasmic. A helical membrane pass occupies residues Val44–Phe64. Over Arg65–Lys79 the chain is Extracellular. The helical transmembrane segment at Ile80–Leu100 threads the bilayer. Residues Ala101–Gly126 lie on the Cytoplasmic side of the membrane. A helical transmembrane segment spans residues Val127–Val147. The Extracellular segment spans residues Gln148–Cys184. N-linked (GlcNAc...) asparagine glycans are attached at residues Asn151 and Asn167. Residues Leu185–Ile205 traverse the membrane as a helical segment. Residues Met206 to Arg219 are Cytoplasmic-facing. A helical membrane pass occupies residues Ala220 to Met240. At Ser241–Arg255 the chain is on the extracellular side. Residues Val256–Ser276 traverse the membrane as a helical segment. At Ser277–Glu330 the chain is on the cytoplasmic side. A disordered region spans residues Thr306–Glu330. Residues Glu320–Glu330 show a composition bias toward polar residues.

The protein belongs to the G-protein coupled receptor 1 family. As to quaternary structure, interacts with FCN1 (via Fibrinogen C-terminal domain). In terms of tissue distribution, highly expressed in hematopoietic tissues, such as spleen and bone marrow, with highest levels in a subset of immune cells, including monocytes or neutrophils. Expressed in adipose tissues with high expression in differentiating adipocytes. Expressed by intestinal endocrine cells.

The protein localises to the cell membrane. Its function is as follows. G protein-coupled receptor that is activated by a major product of dietary fiber digestion, the short chain fatty acids (SCFAs), and that plays a role in the regulation of whole-body energy homeostasis and in intestinal immunity. In omnivorous mammals, the short chain fatty acids acetate, propionate and butyrate are produced primarily by the gut microbiome that metabolizes dietary fibers. SCFAs serve as a source of energy but also act as signaling molecules. That G protein-coupled receptor is probably coupled to the pertussis toxin-sensitive, G(i/o)-alpha family of G proteins but also to the Gq family. Its activation results in the formation of inositol 1,4,5-trisphosphate, the mobilization of intracellular calcium, the phosphorylation of the MAPK3/ERK1 and MAPK1/ERK2 kinases and the inhibition of intracellular cAMP accumulation. May play a role in glucose homeostasis by regulating the secretion of GLP-1, in response to short-chain fatty acids accumulating in the intestine. May also regulate the production of LEP/Leptin, a hormone acting on the central nervous system to inhibit food intake. Finally, may also regulate whole-body energy homeostasis through adipogenesis regulating both differentiation and lipid storage of adipocytes. In parallel to its role in energy homeostasis, may also mediate the activation of the inflammatory and immune responses by SCFA in the intestine, regulating the rapid production of chemokines and cytokines. May also play a role in the resolution of the inflammatory response and control chemotaxis in neutrophils. In addition to SCFAs, may also be activated by the extracellular lectin FCN1 in a process leading to activation of monocytes and inducing the secretion of interleukin-8/IL-8 in response to the presence of microbes. This Mus musculus (Mouse) protein is Free fatty acid receptor 2 (Ffar2).